A 213-amino-acid polypeptide reads, in one-letter code: MRTHVVDHPLVAHKLTHLRNEETDSPTFRRLADELVTLLAYEATRDVRVEPIDVVTPVSPTTGVQLAKPRPLVVPILRAGLGMLDGMMRLLPTAEVGFLGMIRNEETLQASTYAERLPEDLSGRQCYVLDPMLATGGTLAAAIRFLTDRGADHITAICLLAAPEGCARLEQELDGLDVPVTIVTAAMDERLNEKGYIVPGLGDAGDRLYGIVG.

5-phospho-alpha-D-ribose 1-diphosphate contacts are provided by residues Arg-78, Arg-103, and 130–138 (DPMLATGGT). Residues Ile-197 and 202–204 (GDA) contribute to the uracil site. Asp-203 provides a ligand contact to 5-phospho-alpha-D-ribose 1-diphosphate.

It belongs to the UPRTase family. Requires Mg(2+) as cofactor.

The enzyme catalyses UMP + diphosphate = 5-phospho-alpha-D-ribose 1-diphosphate + uracil. It participates in pyrimidine metabolism; UMP biosynthesis via salvage pathway; UMP from uracil: step 1/1. Its activity is regulated as follows. Allosterically activated by GTP. In terms of biological role, catalyzes the conversion of uracil and 5-phospho-alpha-D-ribose 1-diphosphate (PRPP) to UMP and diphosphate. In Nocardioides sp. (strain ATCC BAA-499 / JS614), this protein is Uracil phosphoribosyltransferase.